A 125-amino-acid polypeptide reads, in one-letter code: Steroid Delta-isomerase (125 aa).

The active-site Proton donor is tyrosine 14. Aspartate 38 (proton acceptor) is an active-site residue. Aspartate 99 provides a ligand contact to substrate.

As to quaternary structure, homodimer.

It carries out the reaction a 3-oxo-Delta(5)-steroid = a 3-oxo-Delta(4)-steroid. The protein is Steroid Delta-isomerase (ksi) of Comamonas testosteroni (Pseudomonas testosteroni).